The following is a 488-amino-acid chain: DNA polymerase II small subunit (488 aa).

This sequence belongs to the DNA polymerase delta/II small subunit family. In terms of assembly, heterodimer of a large subunit and a small subunit.

It carries out the reaction DNA(n) + a 2'-deoxyribonucleoside 5'-triphosphate = DNA(n+1) + diphosphate. The enzyme catalyses Exonucleolytic cleavage in the 3'- to 5'-direction to yield nucleoside 5'-phosphates.. Functionally, possesses two activities: a DNA synthesis (polymerase) and an exonucleolytic activity that degrades single-stranded DNA in the 3' to 5' direction. Has a template-primer preference which is characteristic of a replicative DNA polymerase. This is DNA polymerase II small subunit (polB) from Thermoplasma acidophilum (strain ATCC 25905 / DSM 1728 / JCM 9062 / NBRC 15155 / AMRC-C165).